The primary structure comprises 609 residues: Glutamine--fructose-6-phosphate aminotransferase [isomerizing] (609 aa).

Residue C2 is the Nucleophile; for GATase activity of the active site. A Glutamine amidotransferase type-2 domain is found at 2–218 (CGIVGAIAQR…EGDIAEITRR (217 aa)). 2 consecutive SIS domains span residues 286–426 (ADEL…LKGL) and 458–599 (LAED…VDQP). Catalysis depends on K604, which acts as the For Fru-6P isomerization activity.

Homodimer.

It is found in the cytoplasm. It carries out the reaction D-fructose 6-phosphate + L-glutamine = D-glucosamine 6-phosphate + L-glutamate. Catalyzes the first step in hexosamine metabolism, converting fructose-6P into glucosamine-6P using glutamine as a nitrogen source. The sequence is that of Glutamine--fructose-6-phosphate aminotransferase [isomerizing] from Salmonella typhimurium (strain LT2 / SGSC1412 / ATCC 700720).